We begin with the raw amino-acid sequence, 423 residues long: 3-phosphoshikimate 1-carboxyvinyltransferase (423 aa).

The 3-phosphoshikimate site is built by Lys21, Ser22, and Arg26. Lys21 serves as a coordination point for phosphoenolpyruvate. Phosphoenolpyruvate contacts are provided by Gly92 and Arg120. Positions 164, 166, 312, and 339 each coordinate 3-phosphoshikimate. Gln166 serves as a coordination point for phosphoenolpyruvate. Asp312 acts as the Proton acceptor in catalysis. Positions 343 and 385 each coordinate phosphoenolpyruvate.

It belongs to the EPSP synthase family. Monomer.

It is found in the cytoplasm. It catalyses the reaction 3-phosphoshikimate + phosphoenolpyruvate = 5-O-(1-carboxyvinyl)-3-phosphoshikimate + phosphate. It participates in metabolic intermediate biosynthesis; chorismate biosynthesis; chorismate from D-erythrose 4-phosphate and phosphoenolpyruvate: step 6/7. Catalyzes the transfer of the enolpyruvyl moiety of phosphoenolpyruvate (PEP) to the 5-hydroxyl of shikimate-3-phosphate (S3P) to produce enolpyruvyl shikimate-3-phosphate and inorganic phosphate. This Thermoanaerobacter pseudethanolicus (strain ATCC 33223 / 39E) (Clostridium thermohydrosulfuricum) protein is 3-phosphoshikimate 1-carboxyvinyltransferase.